The primary structure comprises 280 residues: Myelin proteolipid protein B (280 aa).

Over 1–10 (MGWHDGCIRC) the chain is Cytoplasmic. Residues cysteine 7 and cysteine 10 are each lipidated (S-palmitoyl cysteine). A helical membrane pass occupies residues 11–36 (MVGVPFASVIATVLCFAGVALFCGCG). At 37 to 59 (HEALSGTEKLIETYFSKNYQEYE) the chain is on the extracellular side. The chain crosses the membrane as a helical span at residues 60-88 (YLIHVINAFQYVIYGIAIFFFLYGILLLA). The Cytoplasmic segment spans residues 89–152 (EGFYTTTAIK…LGKWLGHPDK (64 aa)). 2 S-palmitoyl cysteine lipidation sites follow: cysteine 140 and cysteine 142. A helical membrane pass occupies residues 153–179 (FVGVTYVITILWILIFACSAVPVYIYF). Topologically, residues 180 to 239 (NTWVTCQSIAFPGKTTTSVSTLCLDARMYGVLPWNAFPGKVCGTSLLAICKTSEFQMTFH) are extracellular. 2 disulfide bridges follow: cysteine 185/cysteine 229 and cysteine 202/cysteine 221. The helical transmembrane segment at 240–269 (LFIAAFVGAAATLVALLTYMVGASFNYAVL) threads the bilayer. Residues 270 to 280 (RVTGRSDRSKF) lie on the Cytoplasmic side of the membrane.

It belongs to the myelin proteolipid protein family.

The protein resides in the cell membrane. Functionally, this is the major myelin protein from the central nervous system. It plays an important role in the formation or maintenance of the multilamellar structure of myelin. This is Myelin proteolipid protein B (plp1-b) from Xenopus laevis (African clawed frog).